We begin with the raw amino-acid sequence, 378 residues long: Leukosialin (378 aa).

Positions 1-7 (WAQVVSQ) are cleaved as a signal peptide. Topologically, residues 8–231 (ENLPNTMTML…TVPPRPGSSG (224 aa)) are extracellular. Thr13, Thr15, and Thr20 each carry an O-linked (GalNAc...) threonine glycan. Residues 13 to 33 (TMTMLPFTPNSESPSTSEALS) form a disordered region. 3 O-linked (GalNAc...) serine glycosylation sites follow: Ser23, Ser25, and Ser27. An O-linked (GalNAc...) threonine glycan is attached at Thr28. Ser29 and Ser33 each carry an O-linked (GalNAc...) serine glycan. Thr34 carries an O-linked (GalNAc...) threonine glycan. 2 O-linked (GalNAc...) serine glycosylation sites follow: Ser36 and Ser37. O-linked (GalNAc...) threonine glycosylation occurs at Thr40. O-linked (GalNAc...) serine glycans are attached at residues Ser108 and Ser113. 3 O-linked (GalNAc...) threonine glycosylation sites follow: Thr118, Thr120, and Thr124. O-linked (GalNAc...) serine glycans are attached at residues Ser125 and Ser126. O-linked (GalNAc...) threonine glycosylation occurs at Thr174. Ser176 and Ser180 each carry an O-linked (GalNAc...) serine glycan. An O-linked (GalNAc...) threonine glycan is attached at Thr183. O-linked (GalNAc...) serine glycosylation occurs at Ser187. O-linked (GalNAc...) threonine glycosylation is present at Thr189. The helical transmembrane segment at 232-254 (MLLVSMLIALTVVLVLVALLLLW) threads the bilayer. A required for interaction with EZR, MSN and RDX and for co-localization to microvilli region spans residues 255-285 (RQRQKRRTGALTLSRGGKRNGTVDAWAGPAR). Residues 255-378 (RQRQKRRTGA…AKDGAAPQSL (124 aa)) are Cytoplasmic-facing. A Nuclear localization signal motif is present at residues 259-273 (KRRTGALTLSRGGKR). The tract at residues 265–378 (LTLSRGGKRN…AKDGAAPQSL (114 aa)) is disordered. A Phosphoserine modification is found at Ser268. The residue at position 276 (Thr276) is a Phosphothreonine. Polar residues predominate over residues 310–321 (GSGQRPTLTTFF). Position 311 is a phosphoserine (Ser311). Residue Thr316 is modified to Phosphothreonine. A phosphoserine mark is found at Ser322 and Ser326. Residue Ser330 is modified to Phosphoserine; by PKC/PRKCQ. Position 354 is a phosphoserine (Ser354). Residue Thr361 is modified to Phosphothreonine.

Interacts with SIGLEC1. In terms of assembly, monomer. Interacts with CTNNB1. Interacts with EZR, MSN and RDX (via FERM domain). Post-translationally, has a high content of sialic acid and O-linked carbohydrate structures. In terms of processing, phosphorylation at Ser-330 is regulated by chemokines, requires its association with ERM proteins (EZR, RDX and MSN) and is essential for its function in the regulation of T-cell trafficking to lymph nodes. Cleavage by CTSG releases its extracellular domain and triggers its intramembrane proteolysis by gamma-secretase releasing the CD43 cytoplasmic tail chain (CD43-ct) which translocates to the nucleus. Post-translationally, sumoylated. Cell surface of thymocytes, T-lymphocytes, neutrophils, plasma cells and myelomas.

It is found in the membrane. Its subcellular location is the cell projection. The protein localises to the microvillus. The protein resides in the uropodium. It localises to the nucleus. It is found in the PML body. Predominant cell surface sialoprotein of leukocytes which regulates multiple T-cell functions, including T-cell activation, proliferation, differentiation, trafficking and migration. Positively regulates T-cell trafficking to lymph-nodes via its association with ERM proteins (EZR, RDX and MSN). Negatively regulates Th2 cell differentiation and predisposes the differentiation of T-cells towards a Th1 lineage commitment. Promotes the expression of IFN-gamma by T-cells during T-cell receptor (TCR) activation of naive cells and induces the expression of IFN-gamma by CD4(+) T-cells and to a lesser extent by CD8(+) T-cells. Plays a role in preparing T-cells for cytokine sensing and differentiation into effector cells by inducing the expression of cytokine receptors IFNGR and IL4R, promoting IFNGR and IL4R signaling and by mediating the clustering of IFNGR with TCR. Acts as a major E-selectin ligand responsible for Th17 cell rolling on activated vasculature and recruitment during inflammation. Mediates Th17 cells, but not Th1 cells, adhesion to E-selectin. Acts as a T-cell counter-receptor for SIGLEC1. Its function is as follows. Protects cells from apoptotic signals, promoting cell survival. In Rattus norvegicus (Rat), this protein is Leukosialin (Spn).